We begin with the raw amino-acid sequence, 23 residues long: Laccase-1 (23 aa).

The protein belongs to the multicopper oxidase family. Cu cation is required as a cofactor.

It is found in the secreted. It catalyses the reaction 4 hydroquinone + O2 = 4 benzosemiquinone + 2 H2O. With respect to regulation, strongly inhibited by sodium azide, sodium cyanide, Li(+), Sn(+), Hg(2+), and the disulfide-reducing agents beta-mercaptoethanol, dithiothreitol and thioglycolic acid. Moderately inhibited by Mn(2+) and Fe(2+), inhibition by these metal ions is stronger at 0.1 mM than at 1 mM. Moderately inhibited by Cu(2+). In terms of biological role, lignin degradation and detoxification of lignin-derived products. Demethylates eucalyptus hard wood lignin. Has high activity against the non-phenolic heterocyclic compound ABTS, and lower activity against the phenolic substrates syringic acid, caffeic acid, syringaldazine, vanillic acid, catechol and levodihydroxyphenylalanine. This chain is Laccase-1, found in Galerina sp.